The following is a 355-amino-acid chain: 5-formaminoimidazole-4-carboxamide-1-(beta)-D-ribofuranosyl 5'-monophosphate synthetase (355 aa).

Positions 27 and 94 each coordinate 5-amino-1-(5-phospho-beta-D-ribosyl)imidazole-4-carboxamide. Residues 101–332 enclose the ATP-grasp domain; sequence TESFAELAVP…YSDMIEENLS (232 aa). ATP is bound by residues 144–195 and glutamate 225; that span reads PEKI…TRYY. Asparagine 254 serves as a coordination point for 5-amino-1-(5-phospho-beta-D-ribosyl)imidazole-4-carboxamide. The Mg(2+) site is built by glutamate 292 and glutamate 305.

Belongs to the phosphohexose mutase family. Requires Mg(2+) as cofactor. It depends on Mn(2+) as a cofactor.

It carries out the reaction 5-amino-1-(5-phospho-beta-D-ribosyl)imidazole-4-carboxamide + formate + ATP = 5-formamido-1-(5-phospho-D-ribosyl)imidazole-4-carboxamide + ADP + phosphate. It participates in purine metabolism; IMP biosynthesis via de novo pathway; 5-formamido-1-(5-phospho-D-ribosyl)imidazole-4-carboxamide from 5-amino-1-(5-phospho-D-ribosyl)imidazole-4-carboxamide (formate route): step 1/1. In terms of biological role, catalyzes the ATP- and formate-dependent formylation of 5-aminoimidazole-4-carboxamide-1-beta-d-ribofuranosyl 5'-monophosphate (AICAR) to 5-formaminoimidazole-4-carboxamide-1-beta-d-ribofuranosyl 5'-monophosphate (FAICAR) in the absence of folates. The chain is 5-formaminoimidazole-4-carboxamide-1-(beta)-D-ribofuranosyl 5'-monophosphate synthetase from Methanococcoides burtonii (strain DSM 6242 / NBRC 107633 / OCM 468 / ACE-M).